The chain runs to 435 residues: 5'-deoxyadenosine deaminase (435 aa).

Zn(2+)-binding residues include H64 and H66. 2 residues coordinate substrate: E93 and H185. H212 is a Zn(2+) binding site. Residues E215 and D300 each coordinate substrate. D300 provides a ligand contact to Zn(2+).

Belongs to the metallo-dependent hydrolases superfamily. MTA/SAH deaminase family. Homotetramer. Zn(2+) is required as a cofactor.

The enzyme catalyses 5'-deoxyadenosine + H2O + H(+) = 5'-deoxyinosine + NH4(+). It carries out the reaction S-adenosyl-L-homocysteine + H2O + H(+) = S-inosyl-L-homocysteine + NH4(+). It catalyses the reaction S-methyl-5'-thioadenosine + H2O + H(+) = S-methyl-5'-thioinosine + NH4(+). The catalysed reaction is adenosine + H2O + H(+) = inosine + NH4(+). It participates in amino-acid biosynthesis; S-adenosyl-L-methionine biosynthesis. Catalyzes the deamination of three SAM-derived enzymatic products, namely 5'-deoxyadenosine, S-adenosyl-L-homocysteine, and 5'-methylthioadenosine, to produce the inosine analogs. Can also deaminate adenosine. The preferred substrate for this enzyme is 5'-deoxyadenosine, but all these substrates are efficiently deaminated. Likely functions in a S-adenosyl-L-methionine (SAM) recycling pathway from S-adenosyl-L-homocysteine (SAH) produced from SAM-dependent methylation reactions. May also be involved in the recycling of 5'-deoxyadenosine, whereupon the 5'-deoxyribose moiety of 5'-deoxyinosine is further metabolized to deoxyhexoses used for the biosynthesis of aromatic amino acids in methanogens. The chain is 5'-deoxyadenosine deaminase from Methanobrevibacter smithii (strain ATCC 35061 / DSM 861 / OCM 144 / PS).